The sequence spans 286 residues: Ribosome-inactivating protein beta-momorcharin (286 aa).

An N-terminal signal peptide occupies residues 1 to 23; it reads MVKCLLLSFLIIAIFIGVPTAKG. An N-linked (GlcNAc...) asparagine glycan is attached at asparagine 74. Catalysis depends on residues tyrosine 93, tyrosine 132, glutamate 181, and arginine 184.

The protein belongs to the ribosome-inactivating protein family. Type 1 RIP subfamily. In terms of processing, bound to a branched hexasaccharide.

The enzyme catalyses Endohydrolysis of the N-glycosidic bond at one specific adenosine on the 28S rRNA.. Its function is as follows. Irreversibly relaxes supercoiled DNA and catalyzes double-stranded breakage. Also acts as a ribosome inactivating protein. The protein is Ribosome-inactivating protein beta-momorcharin (MAP30) of Momordica charantia (Bitter gourd).